Consider the following 259-residue polypeptide: Protein TILLER ANGLE CONTROL 1 (259 aa).

The IGT motif signature appears at 56–62 (GILAIGT). 3 disordered regions span residues 96–123 (EEKA…AKMH), 206–226 (SCME…PLKA), and 239–259 (GKKI…PVTA). The segment covering 109 to 119 (APSEPASALEP) has biased composition (low complexity).

This sequence belongs to the TAC family. Expressed in the basal part of seedlings.

Involved in the regulation of tiller growth angle. Promotes horizontal shoot growth. TAC1 and LAZY1 play opposite functions in the regulation of tiller growth angle. This chain is Protein TILLER ANGLE CONTROL 1, found in Oryza sativa subsp. indica (Rice).